We begin with the raw amino-acid sequence, 429 residues long: Glutamate-1-semialdehyde 2,1-aminomutase (429 aa).

Position 267 is an N6-(pyridoxal phosphate)lysine (Lys-267).

It belongs to the class-III pyridoxal-phosphate-dependent aminotransferase family. HemL subfamily. As to quaternary structure, homodimer. The cofactor is pyridoxal 5'-phosphate.

It is found in the cytoplasm. The catalysed reaction is (S)-4-amino-5-oxopentanoate = 5-aminolevulinate. It participates in porphyrin-containing compound metabolism; protoporphyrin-IX biosynthesis; 5-aminolevulinate from L-glutamyl-tRNA(Glu): step 2/2. The polypeptide is Glutamate-1-semialdehyde 2,1-aminomutase (Xanthomonas campestris pv. campestris (strain 8004)).